The chain runs to 451 residues: DNA-directed RNA polymerase subunit Rpo1C (451 aa).

The interval 1 to 68 (MQDIIGKIED…DDDELLDAVE (68 aa)) is unknown. Positions 69-451 (DDYQRILKVQ…SVSVVMKERK (383 aa)) are DNA-directed RNA polymerase subunit Rpo1C.

The protein belongs to the RNA polymerase beta' chain family. As to quaternary structure, part of the RNA polymerase complex.

The protein resides in the cytoplasm. The catalysed reaction is RNA(n) + a ribonucleoside 5'-triphosphate = RNA(n+1) + diphosphate. Its function is as follows. DNA-dependent RNA polymerase (RNAP) catalyzes the transcription of DNA into RNA using the four ribonucleoside triphosphates as substrates. Forms part of the jaw domain. The polypeptide is DNA-directed RNA polymerase subunit Rpo1C (Methanothermobacter thermautotrophicus (strain ATCC 29096 / DSM 1053 / JCM 10044 / NBRC 100330 / Delta H) (Methanobacterium thermoautotrophicum)).